A 189-amino-acid polypeptide reads, in one-letter code: Apolipophorin-3 (189 aa).

Residues 1 to 18 (MAAKFVVVLAACVALSHS) form the signal peptide. Residues 19 to 23 (AMVRR) constitute a propeptide that is removed on maturation.

This sequence belongs to the insect apolipophorin-3 family. In terms of assembly, equilibrium between a soluble monomer and a bound lipoprotein form. Apolipophorin-3 associates with lipophorin during lipid loading until each particle contains 9 or 14 molecules of apolipophorin-3. In terms of tissue distribution, hemolymph.

It is found in the secreted. In terms of biological role, assists in the loading of diacylglycerol, generated from triacylglycerol stores in the fat body through the action of adipokinetic hormone, into lipophorin, the hemolymph lipoprotein. It increases the lipid carrying capacity of lipophorin by covering the expanding hydrophobic surface resulting from diacylglycerol uptake. It thus plays a critical role in the transport of lipids during flight in several species of insects. In Manduca sexta (Tobacco hawkmoth), this protein is Apolipophorin-3.